Here is a 72-residue protein sequence, read N- to C-terminus: Translation initiation factor IF-1 (72 aa).

Residues 1–72 (MSKEGKITLK…TRGRIIYRIS (72 aa)) enclose the S1-like domain.

The protein belongs to the IF-1 family. As to quaternary structure, component of the 30S ribosomal translation pre-initiation complex which assembles on the 30S ribosome in the order IF-2 and IF-3, IF-1 and N-formylmethionyl-tRNA(fMet); mRNA recruitment can occur at any time during PIC assembly.

The protein resides in the cytoplasm. One of the essential components for the initiation of protein synthesis. Stabilizes the binding of IF-2 and IF-3 on the 30S subunit to which N-formylmethionyl-tRNA(fMet) subsequently binds. Helps modulate mRNA selection, yielding the 30S pre-initiation complex (PIC). Upon addition of the 50S ribosomal subunit IF-1, IF-2 and IF-3 are released leaving the mature 70S translation initiation complex. The sequence is that of Translation initiation factor IF-1 from Malacoplasma penetrans (strain HF-2) (Mycoplasma penetrans).